The sequence spans 438 residues: MTITKIHARSVYDSRGNPTVEVDIVTETGLHRAIVPSGASTGSHEACELRDGDKSKWGGKGVTKAVANVNDTIAPALIKEKLDVKDQSAVDAFLNKLDGTTNKTNLGANAILGVSMAIAKAAAAEKGVPLYAHISDLAGTKKPYVLPVPFQNVLNGGSHAGGRLAFQEFMIVPCEAPTFSEAMRQGAEVYQKLKALAKKTYGQSAGNVGDEGGVAPDIQTAEEALDLITKAIEEAGYTGKIKIAMDVASSEFYKADEKKYDLDFKNPDSDKSKWLTYEQLAEMYKSLAEKYPIVSIEDPFAEDDWEAWSYFFKTYDGQIVGDDLTVTNPEFIKKAIELKSCNALLLKVNQIGTITEAIQAAKDAFGAGWGVMVSHRSGETEDVTIADIVVGLRSGQIKTGAPARSERLAKLNQILRIEEELGDNAVYAGNNFRTAVNL.

2 residues coordinate substrate: His-159 and Glu-168. The Proton donor role is filled by Glu-211. Asp-246, Glu-297, and Asp-322 together coordinate Mg(2+). Residues Glu-297 and Asp-322 each coordinate substrate. Residue Lys-347 is the Proton acceptor of the active site. Substrate contacts are provided by residues 374–377 (SHRS) and Lys-398.

This sequence belongs to the enolase family. As to quaternary structure, homodimer. Mg(2+) is required as a cofactor.

It localises to the cytoplasm. It carries out the reaction (2R)-2-phosphoglycerate = phosphoenolpyruvate + H2O. The protein operates within carbohydrate degradation; glycolysis; pyruvate from D-glyceraldehyde 3-phosphate: step 4/5. In Alternaria alternata (Alternaria rot fungus), this protein is Enolase (ENO).